A 345-amino-acid polypeptide reads, in one-letter code: S-adenosylmethionine:tRNA ribosyltransferase-isomerase (345 aa).

It belongs to the QueA family. In terms of assembly, monomer.

Its subcellular location is the cytoplasm. The catalysed reaction is 7-aminomethyl-7-carbaguanosine(34) in tRNA + S-adenosyl-L-methionine = epoxyqueuosine(34) in tRNA + adenine + L-methionine + 2 H(+). Its pathway is tRNA modification; tRNA-queuosine biosynthesis. Its function is as follows. Transfers and isomerizes the ribose moiety from AdoMet to the 7-aminomethyl group of 7-deazaguanine (preQ1-tRNA) to give epoxyqueuosine (oQ-tRNA). The sequence is that of S-adenosylmethionine:tRNA ribosyltransferase-isomerase from Shewanella baltica (strain OS185).